We begin with the raw amino-acid sequence, 121 residues long: Small ribosomal subunit protein uS13 (121 aa).

Residues 93–121 (KGLPMRGQRTRTNARTRKGPRRAAQALKK) are disordered.

This sequence belongs to the universal ribosomal protein uS13 family. In terms of assembly, part of the 30S ribosomal subunit. Forms a loose heterodimer with protein S19. Forms two bridges to the 50S subunit in the 70S ribosome.

Functionally, located at the top of the head of the 30S subunit, it contacts several helices of the 16S rRNA. In the 70S ribosome it contacts the 23S rRNA (bridge B1a) and protein L5 of the 50S subunit (bridge B1b), connecting the 2 subunits; these bridges are implicated in subunit movement. Contacts the tRNAs in the A and P-sites. The polypeptide is Small ribosomal subunit protein uS13 (Burkholderia ambifaria (strain ATCC BAA-244 / DSM 16087 / CCUG 44356 / LMG 19182 / AMMD) (Burkholderia cepacia (strain AMMD))).